Here is a 179-residue protein sequence, read N- to C-terminus: ATP-dependent protease subunit HslV (179 aa).

Residue Thr7 is part of the active site. Na(+)-binding residues include Gly162, Cys165, and Thr168.

The protein belongs to the peptidase T1B family. HslV subfamily. As to quaternary structure, a double ring-shaped homohexamer of HslV is capped on each side by a ring-shaped HslU homohexamer. The assembly of the HslU/HslV complex is dependent on binding of ATP.

Its subcellular location is the cytoplasm. The catalysed reaction is ATP-dependent cleavage of peptide bonds with broad specificity.. Allosterically activated by HslU binding. Functionally, protease subunit of a proteasome-like degradation complex believed to be a general protein degrading machinery. In Aromatoleum aromaticum (strain DSM 19018 / LMG 30748 / EbN1) (Azoarcus sp. (strain EbN1)), this protein is ATP-dependent protease subunit HslV.